Here is a 625-residue protein sequence, read N- to C-terminus: MPGTKRFQHVIETPEPGKWELSGYEAAVPITEKSNPLTQDLDKADAENIVRLLGQCDAEIFQEEGQALSTYQRLYSESILTTMVQVAGKVQEVLKEPDGGLVVLSGGGTSGRMAFLMSVSFNQLMKGLGQKPLYTYLIAGGDRSVVASREGTEDSALHGIEELKKVAAGKKRVIVIGISVGLSAPFVAGQMDCCMNNTAVFLPVLVGFNPVSMARNDPIEDWSSTFRQVAERMQKMQEKQKAFVLNPAIGPEGLSGSSRMKGGSATKILLETLLLAAHKTVDQGIAASQRCLLEILRTFERAHQVTYSQSPKIATLMKSVSTSLEKKGHVYLVGWQTLGIIAIMDGVECIHTFGADFRDVRGFLIGDHSDMFNQKAELTNQGPQFTFSQEDFLTSILPSLTEIDTVVFIFTLDDNLTEVQTIVEQVKEKTNHIQALAHSTVGQTLPIPLKKLFPSIISITWPLLFFEYEGNFIQKFQRELSTKWVLNTVSTGAHVLLGKILQNHMLDLRISNSKLFWRALAMLQRFSGQSKARCIESLLRAIHFPQPLSDDIRAAPISCHVQVAHEKEQVIPIALLSLLFRCSITEAQAHLAAAPSVCEAVRSALAGPGQKRTADPLEILEPDVQ.

2 consecutive SIS domains span residues 90–286 and 320–499; these read VQEV…QGIA and VSTS…LLGK. Residues 109–110, E153, and 179–181 each bind beta-D-fructose 1-phosphate; these read TS and SVG. 109–110 is a binding site for beta-D-fructose 6-phosphate; the sequence is TS. 179 to 181 is a binding site for beta-D-fructose 6-phosphate; the sequence is SVG. Positions 199-200 are important for interaction with GCK; it reads AV. E348 contacts beta-D-fructose 1-phosphate. The essential for interaction with GCK stretch occupies residues 463 to 465; the sequence is LLF. Position 514 (K514) interacts with beta-D-fructose 1-phosphate. Position 514 (K514) interacts with beta-D-fructose 6-phosphate.

It belongs to the GCKR family. As to quaternary structure, interacts (fructose 6-phosphate bound form) with GCK. Found in liver and pancreas. Not detected in muscle, brain, heart, thymus, intestine, uterus, adipose tissue, kidney, adrenal, lung or spleen.

The protein resides in the cytoplasm. The protein localises to the nucleus. It is found in the mitochondrion. Its function is as follows. Regulates glucokinase (GCK) by forming an inactive complex with this enzyme. Acts by promoting GCK recruitment to the nucleus, possibly to provide a reserve of GCK that can be quickly released in the cytoplasm after a meal. The affinity of GCKR for GCK is modulated by fructose metabolites: GCKR with bound fructose 6-phosphate has increased affinity for GCK, while GCKR with bound fructose 1-phosphate has strongly decreased affinity for GCK and does not inhibit GCK activity. In Homo sapiens (Human), this protein is Glucokinase regulatory protein.